The primary structure comprises 467 residues: Glycosyl hydrolase family 109 protein 1 (467 aa).

A signal peptide spans 1-22 (MKKLLLNTLIGLALLTCQTSFA). NAD(+)-binding positions include 66–67 (MR), aspartate 88, 137–140 (WKHH), 157–158 (EV), and asparagine 186. Substrate contacts are provided by residues tyrosine 215, arginine 231, 243–246 (YATH), and tyrosine 321. Tyrosine 243 is an NAD(+) binding site.

This sequence belongs to the Gfo/Idh/MocA family. Glycosyl hydrolase 109 subfamily. NAD(+) is required as a cofactor.

Glycosidase. The polypeptide is Glycosyl hydrolase family 109 protein 1 (Bacteroides thetaiotaomicron (strain ATCC 29148 / DSM 2079 / JCM 5827 / CCUG 10774 / NCTC 10582 / VPI-5482 / E50)).